We begin with the raw amino-acid sequence, 311 residues long: tRNA dimethylallyltransferase (311 aa).

An ATP-binding site is contributed by 12 to 19 (GPTASGKT). 14 to 19 (TASGKT) is a substrate binding site. Interaction with substrate tRNA regions lie at residues 37–40 (DSAL), 161–165 (QRINR), and 241–246 (RCVGYR).

The protein belongs to the IPP transferase family. In terms of assembly, monomer. Requires Mg(2+) as cofactor.

It catalyses the reaction adenosine(37) in tRNA + dimethylallyl diphosphate = N(6)-dimethylallyladenosine(37) in tRNA + diphosphate. Functionally, catalyzes the transfer of a dimethylallyl group onto the adenine at position 37 in tRNAs that read codons beginning with uridine, leading to the formation of N6-(dimethylallyl)adenosine (i(6)A). The protein is tRNA dimethylallyltransferase of Histophilus somni (strain 129Pt) (Haemophilus somnus).